Consider the following 368-residue polypeptide: p21-activated protein kinase-interacting protein 1-like (368 aa).

5 WD repeats span residues 45-82 (AHTASLNAVSSSNQFIATGSKDETIQLYDMCKKTEHGA), 85-123 (HHDGTISCLEFYGTSHLLSGGQDGLICVWSTKKWECLKT), 126-165 (AHKGQVTSLSVHPSGKLALSVGTDKTLRTWNLIEGRSAFI), 207-245 (AFTKRISCLKFLKNSLLAVGGDDESVRIYDVTSQKCVCE), and 248-289 (AHEN…IESP).

The protein resides in the nucleus. It localises to the nucleolus. Negatively regulates the PAK1 kinase. PAK1 is a member of the PAK kinase family, which has been shown to play a positive role in the regulation of signaling pathways involving MAPK8 and RELA. PAK1 exists as an inactive homodimer, which is activated by binding of small GTPases such as CDC42 to an N-terminal regulatory domain. PAK1IP1 also binds to the N-terminus of PAK1, and inhibits the specific activation of PAK1 by CDC42. May be involved in ribosomal large subunit assembly. The chain is p21-activated protein kinase-interacting protein 1-like (pak1ip1) from Danio rerio (Zebrafish).